Here is a 199-residue protein sequence, read N- to C-terminus: Putative pseudouridine methyltransferase (199 aa).

Leu-132 and Cys-186 together coordinate S-adenosyl-L-methionine.

It belongs to the methyltransferase superfamily. TrmY family.

It is found in the cytoplasm. The chain is Putative pseudouridine methyltransferase from Vibrio parahaemolyticus serotype O3:K6 (strain RIMD 2210633).